Here is a 136-residue protein sequence, read N- to C-terminus: Large-conductance mechanosensitive channel (136 aa).

Transmembrane regions (helical) follow at residues 10 to 30 (FAMR…AAFG) and 76 to 96 (GVFI…FMAI).

The protein belongs to the MscL family. As to quaternary structure, homopentamer.

It is found in the cell inner membrane. In terms of biological role, channel that opens in response to stretch forces in the membrane lipid bilayer. May participate in the regulation of osmotic pressure changes within the cell. The polypeptide is Large-conductance mechanosensitive channel (Shigella boydii serotype 18 (strain CDC 3083-94 / BS512)).